The chain runs to 427 residues: Adenylosuccinate synthetase (427 aa).

GTP-binding positions include 12-18 and 40-42; these read GDEGKGK and GHT. D13 functions as the Proton acceptor in the catalytic mechanism. D13 and G40 together coordinate Mg(2+). IMP contacts are provided by residues 13–16, 38–41, T128, R142, Q223, T238, and R302; these read DEGK and NAGH. H41 acts as the Proton donor in catalysis. 298-304 provides a ligand contact to substrate; that stretch reads TTTGRPR. GTP contacts are provided by residues R304, 330–332, and 412–414; these read KLD and GVG.

The protein belongs to the adenylosuccinate synthetase family. Homodimer. Requires Mg(2+) as cofactor.

The protein localises to the cytoplasm. The enzyme catalyses IMP + L-aspartate + GTP = N(6)-(1,2-dicarboxyethyl)-AMP + GDP + phosphate + 2 H(+). It participates in purine metabolism; AMP biosynthesis via de novo pathway; AMP from IMP: step 1/2. Functionally, plays an important role in the de novo pathway of purine nucleotide biosynthesis. Catalyzes the first committed step in the biosynthesis of AMP from IMP. The sequence is that of Adenylosuccinate synthetase from Pelotomaculum thermopropionicum (strain DSM 13744 / JCM 10971 / SI).